A 492-amino-acid chain; its full sequence is GlcNAc-binding protein A (492 aa).

The N-terminal stretch at 1 to 23 (MNKSSTKTLIALSMMAVSSGVSA) is a signal peptide. The Chitin-binding type-4 domain maps to 24–204 (HGYVSETNDG…AFYNVIDVKF (181 aa)). One can recognise a Chitin-binding type-3 domain in the interval 443 to 484 (AGTKVLAEDSNVYQCKEFPYSGYCVQWTETATNFAPGVGSDW).

Belongs to the GbpA family.

Its subcellular location is the secreted. In terms of biological role, probably interacts with GlcNAc residues. May promote attachment to both epithelial cell surfaces and chitin. In Aliivibrio fischeri (strain MJ11) (Vibrio fischeri), this protein is GlcNAc-binding protein A.